Here is a 529-residue protein sequence, read N- to C-terminus: Low affinity inorganic phosphate transporter 5 (529 aa).

Residues 1–21 (MASNNLNVLNALDTAHTQWYH) are Cytoplasmic-facing. The chain crosses the membrane as a helical span at residues 22–42 (VTAVVIAGMGFFTDAYDLFCI). Residues 43-71 (STISKLLGRLYYYDPHTHAPGKLPHTVNN) are Extracellular-facing. A helical membrane pass occupies residues 72–92 (WVTGVALVGTLTGQLVFGWLG). Residues 93–99 (DKLGRKK) lie on the Cytoplasmic side of the membrane. A helical transmembrane segment spans residues 100–120 (VYGLTLILMVICALSSGLSFG). Topologically, residues 121-124 (YSRK) are extracellular. A helical transmembrane segment spans residues 125 to 145 (VVIGTLCFFRFWLGFGIGGDY). Residues 146 to 163 (PLSATIMSEYANKRTRGA) lie on the Cytoplasmic side of the membrane. The chain crosses the membrane as a helical span at residues 164 to 184 (FIAAVFAMQGVGIIFAGLVLM). The Extracellular portion of the chain corresponds to 185-211 (TVSKVFLMRYAGKAFSTDEVFSTEPEA). Residues 212–232 (DYVWRIVLMLGALPALLTYYW) traverse the membrane as a helical segment. Residues 233–291 (RMKMPETGRYTAIIEGNAKQAAIDMGKVLEIEIQAEGEKLAKFKSANDYSLLSNEFFQR) are Cytoplasmic-facing. Residues 292-312 (HGLHLIGTMSTWFLLDIAFYS) form a helical membrane-spanning segment. Residues 313–344 (QNLTQKDIFPTMGLVSDAKSISALREMFETSR) are Extracellular-facing. Residue Asn-314 is glycosylated (N-linked (GlcNAc...) asparagine). A helical transmembrane segment spans residues 345 to 365 (AMFVIALLGTFPGYWFTVFFI). Topologically, residues 366–374 (EKIGRFKIQ) are cytoplasmic. A helical transmembrane segment spans residues 375 to 395 (LMGFFMMSIFMAIIGVRYDYL). Residues 396 to 405 (KTKDHKWTFA) are Extracellular-facing. Residues 406 to 426 (ALYGLTFFFANSGPNSTTFVL) form a helical membrane-spanning segment. At 427–472 (PAELFPTRVRSTCHALSAASGKAGAMVSAFGVQQYTQDGEVHKIKK) the chain is on the cytoplasmic side. Residues 473-493 (AMLFLAFTNMVGFCCTFLVTE) form a helical membrane-spanning segment. At 494–529 (TKGRSLEEISGEDENQNETKMKGRPVSGGHQDDGWD) the chain is on the extracellular side. Residues 500–529 (EEISGEDENQNETKMKGRPVSGGHQDDGWD) form a disordered region. Residue Asn-510 is glycosylated (N-linked (GlcNAc...) asparagine).

Belongs to the major facilitator superfamily. Phosphate:H(+) symporter (TC 2.A.1.9) family. Expressed at low levels in non-mycorrhized roots.

Its subcellular location is the cell membrane. The enzyme catalyses phosphate(in) + H(+)(in) = phosphate(out) + H(+)(out). Its function is as follows. Low-affinity transporter for external inorganic phosphate (Pi) probably involved in the acquisition of phosphate released by arbuscular mycorrhizal (AM) fungi during AM symbiosis. The sequence is that of Low affinity inorganic phosphate transporter 5 from Petunia hybrida (Petunia).